We begin with the raw amino-acid sequence, 548 residues long: ATP synthase subunit alpha (548 aa).

172 to 179 (GDRKTGKT) provides a ligand contact to ATP. A disordered region spans residues 510–548 (QFTTSSGESAAPSEPEAEALAADEVGQETVKVNRPAPKK). The segment covering 514–531 (SSGESAAPSEPEAEALAA) has biased composition (low complexity).

This sequence belongs to the ATPase alpha/beta chains family. As to quaternary structure, F-type ATPases have 2 components, CF(1) - the catalytic core - and CF(0) - the membrane proton channel. CF(1) has five subunits: alpha(3), beta(3), gamma(1), delta(1), epsilon(1). CF(0) has three main subunits: a(1), b(2) and c(9-12). The alpha and beta chains form an alternating ring which encloses part of the gamma chain. CF(1) is attached to CF(0) by a central stalk formed by the gamma and epsilon chains, while a peripheral stalk is formed by the delta and b chains.

The protein resides in the cell membrane. It catalyses the reaction ATP + H2O + 4 H(+)(in) = ADP + phosphate + 5 H(+)(out). Its function is as follows. Produces ATP from ADP in the presence of a proton gradient across the membrane. The alpha chain is a regulatory subunit. The chain is ATP synthase subunit alpha from Saccharopolyspora erythraea (strain ATCC 11635 / DSM 40517 / JCM 4748 / NBRC 13426 / NCIMB 8594 / NRRL 2338).